The sequence spans 861 residues: Translation initiation factor IF-2 (861 aa).

Disordered regions lie at residues 1-69 (MSDA…GESA) and 92-273 (ARAR…GREK). Over residues 53–65 (GGPGGKQGGGAKG) the composition is skewed to gly residues. Basic and acidic residues predominate over residues 94–108 (ARAEAADREAQKKQD). Over residues 109-120 (AAAMAQRAASEQ) the composition is skewed to low complexity. Composition is skewed to basic and acidic residues over residues 121-155 (RQLE…KAEA) and 163-186 (DSGR…KRTP). Low complexity predominate over residues 213 to 223 (PGPAAKQQPAR). Residues 255 to 273 (RAREREKQRRQDTSGGREK) are compositionally biased toward basic and acidic residues. The tr-type G domain occupies 357–527 (PRAPVIAVMG…ALQAELLDLK (171 aa)). Residues 366–373 (GHVDHGKT) are G1. 366–373 (GHVDHGKT) lines the GTP pocket. The interval 391 to 395 (GITQH) is G2. The interval 413 to 416 (DTPG) is G3. GTP is bound by residues 413 to 417 (DTPGH) and 467 to 470 (NKCD). Positions 467-470 (NKCD) are G4. A G5 region spans residues 503–505 (SAK).

This sequence belongs to the TRAFAC class translation factor GTPase superfamily. Classic translation factor GTPase family. IF-2 subfamily.

It is found in the cytoplasm. Its function is as follows. One of the essential components for the initiation of protein synthesis. Protects formylmethionyl-tRNA from spontaneous hydrolysis and promotes its binding to the 30S ribosomal subunits. Also involved in the hydrolysis of GTP during the formation of the 70S ribosomal complex. The polypeptide is Translation initiation factor IF-2 (Maricaulis maris (strain MCS10) (Caulobacter maris)).